A 461-amino-acid chain; its full sequence is ADP-specific phosphofructokinase (461 aa).

The region spanning 1–457 (MVRELLEKAR…FASYLAMLKE (457 aa)) is the ADPK domain. Mg(2+) is bound by residues glutamate 268, glutamate 298, and aspartate 441. The active-site Proton acceptor is aspartate 441.

Belongs to the carbohydrate kinase PfkC family. The cofactor is Mg(2+).

It is found in the cytoplasm. It catalyses the reaction beta-D-fructose 6-phosphate + ADP = beta-D-fructose 1,6-bisphosphate + AMP + H(+). The protein operates within carbohydrate degradation; glycolysis. Catalyzes the phosphorylation of fructose 6-phosphate to fructose 1,6-bisphosphate using ADP as the phosphate donor. The sequence is that of ADP-specific phosphofructokinase from Thermococcus zilligii.